The sequence spans 121 residues: Small ribosomal subunit protein bS6 (121 aa).

The protein belongs to the bacterial ribosomal protein bS6 family.

Its function is as follows. Binds together with bS18 to 16S ribosomal RNA. The sequence is that of Small ribosomal subunit protein bS6 from Rickettsia canadensis (strain McKiel).